A 215-amino-acid polypeptide reads, in one-letter code: Adenylate kinase (215 aa).

Residue 10 to 15 coordinates ATP; it reads GAGKGT. Residues 30-59 are NMP; that stretch reads STGDMLRAAVKAGTELGLKAKSVMDAGNLV. AMP contacts are provided by residues T31, R36, 57-59, 85-88, and Q92; these read NLV and GFPR. The tract at residues 122–159 is LID; the sequence is GRRVHEGSGRIYHTIFNPPKVEGVDDVTGESLVQRKDD. Residues R123 and 132 to 133 contribute to the ATP site; that span reads IY. Residues R156 and R167 each coordinate AMP. ATP is bound at residue G201.

Belongs to the adenylate kinase family. As to quaternary structure, monomer.

It localises to the cytoplasm. It catalyses the reaction AMP + ATP = 2 ADP. It functions in the pathway purine metabolism; AMP biosynthesis via salvage pathway; AMP from ADP: step 1/1. Its function is as follows. Catalyzes the reversible transfer of the terminal phosphate group between ATP and AMP. Plays an important role in cellular energy homeostasis and in adenine nucleotide metabolism. This Pseudomonas syringae pv. tomato (strain ATCC BAA-871 / DC3000) protein is Adenylate kinase.